Reading from the N-terminus, the 467-residue chain is Nuclear pore complex protein Nup50 (467 aa).

Positions 1–14 (MAKRVAEKELTDRN) are enriched in basic and acidic residues. The segment at 1–20 (MAKRVAEKELTDRNWDEEDE) is disordered. K8 carries the N6-acetyllysine modification. S52 carries the phosphoserine modification. Repeat unit 1 spans residues 76–77 (FG). A 5 X 2 AA repeats of F-G region spans residues 76–303 (FGGGSGGKPL…FSPGNSSLFG (228 aa)). K83 bears the N6-acetyllysine mark. The interval 84-103 (PLEGLTNGNSTDSATPFSSA) is disordered. The span at 89-103 (TNGNSTDSATPFSSA) shows a compositional bias: polar residues. Repeat unit 2 spans residues 113–114 (FG). The residue at position 127 (K127) is an N6-acetyllysine. Disordered regions lie at residues 129–151 (ISSP…STSC) and 201–248 (LENG…EDTS). Over residues 132 to 151 (PKCNSSNQPPSSGPASSTSC) the composition is skewed to polar residues. The binding to CDKN1B stretch occupies residues 144 to 206 (GPASSTSCTG…IEKQLENGGS (63 aa)). S209 carries the phosphoserine modification. The stretch at 226 to 227 (FG) is repeat 3. Over residues 226–236 (FGSTKLQQDSP) the composition is skewed to polar residues. S235 carries the post-translational modification Phosphoserine. Residue T247 is modified to Phosphothreonine. At S269 the chain carries Phosphoserine. The stretch at 272–273 (FG) is repeat 4. S295 bears the Phosphoserine mark. The stretch at 302–303 (FG) is repeat 5. Low complexity predominate over residues 313 to 330 (SSPFSAKASESQAGGSSS). Residues 313 to 348 (SSPFSAKASESQAGGSSSECRDGEEEESDEPPKVVV) form a disordered region. Positions 334 to 467 (DGEEEESDEP…HKILLQKKDV (134 aa)) constitute a RanBD1 domain. K352 participates in a covalent cross-link: Glycyl lysine isopeptide (Lys-Gly) (interchain with G-Cter in SUMO2). K449 carries the N6-acetyllysine modification.

Does not interact with TPR. Interacts with Importin alpha-2, Importin beta, Importin beta-2, NUP153, Ran binding protein 7, CDKN1B and itself. Highly expressed in testis, intermediate levels in kidney, liver, spleen and low basal levels in somatic cells. Expression in testis undergoes changes and subcellular localization during germ cell differentiation.

It is found in the nucleus. Its subcellular location is the nuclear pore complex. The protein resides in the nucleus membrane. In terms of biological role, component of the nuclear pore complex that has a direct role in nuclear protein import. Actively displaces NLSs from importin-alpha, and facilitates disassembly of the importin-alpha:beta-cargo complex and importin recycling. Interacts with regulatory proteins of cell cycle progression including CDKN1B. This interaction is required for correct intracellular transport and degradation of CDKN1B. The sequence is that of Nuclear pore complex protein Nup50 (Nup50) from Rattus norvegicus (Rat).